The following is a 286-amino-acid chain: Ribosomal RNA small subunit methyltransferase A (286 aa).

S-adenosyl-L-methionine contacts are provided by N33, V35, G60, E81, D111, and N129.

It belongs to the class I-like SAM-binding methyltransferase superfamily. rRNA adenine N(6)-methyltransferase family. RsmA subfamily.

It is found in the cytoplasm. It carries out the reaction adenosine(1518)/adenosine(1519) in 16S rRNA + 4 S-adenosyl-L-methionine = N(6)-dimethyladenosine(1518)/N(6)-dimethyladenosine(1519) in 16S rRNA + 4 S-adenosyl-L-homocysteine + 4 H(+). Functionally, specifically dimethylates two adjacent adenosines (A1518 and A1519) in the loop of a conserved hairpin near the 3'-end of 16S rRNA in the 30S particle. May play a critical role in biogenesis of 30S subunits. This chain is Ribosomal RNA small subunit methyltransferase A, found in Streptomyces coelicolor (strain ATCC BAA-471 / A3(2) / M145).